Here is a 1853-residue protein sequence, read N- to C-terminus: DNA-directed RNA polymerase II subunit RPB1 (1853 aa).

Positions 66, 69, 76, 79, 106, 109, 149, and 177 each coordinate Zn(2+). Positions 256 to 268 (PAVVTFGSAKNQD) are lid loop. A rudder loop region spans residues 314–331 (NCIPGLPTATQKGGRPLK). Residues D489, D491, and D493 each contribute to the Mg(2+) site. The interval 827-839 (PSEFFFHAMGGRE) is bridging helix. K1260 participates in a covalent cross-link: Glycyl lysine isopeptide (Lys-Gly) (interchain with G-Cter in ubiquitin). Disordered regions lie at residues 1520–1568 (PWSP…PRTP) and 1589–1853 (SPHY…DPQN). Composition is skewed to low complexity over residues 1589–1811 (SPHY…TPSP) and 1821–1853 (YSPS…DPQN). Tandem repeats lie at residues 1592–1598 (YSPTSPS), 1599–1605 (YSPTSPA), 1616–1622 (YSPTSPS), 1623–1629 (YSPTSPS), 1630–1636 (YSPTSPS), 1637–1643 (YSPTSPS), 1644–1650 (YSPTSPS), 1651–1657 (YSPTSPS), 1658–1664 (YSPTSPS), 1665–1671 (YSPTSPS), 1679–1685 (YSPTSPT), 1686–1692 (YSPTSPT), 1693–1699 (YSPTSPT), 1700–1706 (YSPTSPT), 1707–1713 (YSPTSPS), 1717–1723 (YSPSSPK), 1724–1730 (YSPSSPT), 1731–1737 (YSPTSPS), 1752–1758 (YSPSSPT), 1759–1765 (YTPSSPT), 1779–1785 (YSPTSPT), 1786–1792 (YSPTSPS), 1800–1806 (YSPTSPT), 1821–1827 (YSPSSPT), 1828–1834 (YSPSSPT), and 1842–1848 (YSPSSPT). The tract at residues 1592-1848 (YSPTSPSYSP…SPSYSPSSPT (257 aa)) is C-terminal domain (CTD); 26 X 7 AA approximate tandem repeats of Y-[ST]-P-[ST]-S-P-[AGKNQRST].

The protein belongs to the RNA polymerase beta' chain family. As to quaternary structure, component of the RNA polymerase II (Pol II) complex consisting of 12 subunits. Interacts with sig-7. In terms of processing, the tandem 7 residues repeats in the C-terminal domain (CTD) can be highly phosphorylated. The phosphorylation activates Pol II. Phosphorylation occurs mainly at residues 'Ser-2' and 'Ser-5' of the heptapeptide repeat and starts at the 3- to 4-cell embryonic stage. This phosphorylation also occurs in the early stages of oocyte development and is not detected in oocytes arrested at the meiotic diakinesis stage. In the somatic lineage, phosphorylation at 'Ser-2' is mediated by cdk-12 downstream of cdk-9 whereas in the germline lineage cdk-12 phosphorylates 'Ser-2' independently of cdk-9. Phosphorylation is likely mediated by cdk-7. May be dephosphorylated by fcp-1 in diakinetic oocytes and in 1-cell and 2-cell embryos. Dephosphorylated at 'Ser-5' of the heptapeptide repeat by ssup-72. The phosphorylation state is believed to result from the balanced action of site-specific CTD kinases and phosphatase, and a 'CTD code' that specifies the position of Pol II within the transcription cycle has been proposed. Following transcription stress, the elongating form of RNA polymerase II (RNA pol IIo) is polyubiquitinated via 'Lys-63'-linkages on Lys-1260 at DNA damage sites without leading to degradation: ubiquitination promotes RNA pol IIo backtracking to allow access by the transcription-coupled nucleotide excision repair (TC-NER) machinery. Subsequent DEF1-dependent polyubiquitination by the elongin complex via 'Lys-48'-linkages may lead to proteasome-mediated degradation; presumably at stalled RNA pol II where TC-NER has failed, to halt global transcription and enable 'last resort' DNA repair pathways.

It is found in the nucleus. The protein localises to the chromosome. It catalyses the reaction RNA(n) + a ribonucleoside 5'-triphosphate = RNA(n+1) + diphosphate. DNA-dependent RNA polymerase catalyzes the transcription of DNA into RNA using the four ribonucleoside triphosphates as substrates. Largest and catalytic component of RNA polymerase II which synthesizes mRNA precursors and many functional non-coding RNAs. Forms the polymerase active center together with the second largest subunit. Pol II is the central component of the basal RNA polymerase II transcription machinery. It is composed of mobile elements that move relative to each other. RPB1 is part of the core element with the central large cleft, the clamp element that moves to open and close the cleft and the jaws that are thought to grab the incoming DNA template. At the start of transcription, a single-stranded DNA template strand of the promoter is positioned within the central active site cleft of Pol II. A bridging helix emanates from RPB1 and crosses the cleft near the catalytic site and is thought to promote translocation of Pol II by acting as a ratchet that moves the RNA-DNA hybrid through the active site by switching from straight to bent conformations at each step of nucleotide addition. During transcription elongation, Pol II moves on the template as the transcript elongates. Elongation is influenced by the phosphorylation status of the C-terminal domain (CTD) of Pol II largest subunit (RPB1), which serves as a platform for assembly of factors that regulate transcription initiation, elongation, termination and mRNA processing. Involved in the transcription of several genes including those involved in embryogenesis. The polypeptide is DNA-directed RNA polymerase II subunit RPB1 (Caenorhabditis briggsae).